The chain runs to 106 residues: Tripartite terminase subunit 2 (106 aa).

It belongs to the herpesviridae TRM2 protein family. Associates with TRM1 and TRM3 to form the tripartite terminase complex.

The protein resides in the host nucleus. In terms of biological role, component of the molecular motor that translocates viral genomic DNA in empty capsid during DNA packaging. Forms a tripartite terminase complex together with TRM1 and TRM3 in the host cytoplasm. Once the complex reaches the host nucleus, it interacts with the capsid portal vertex. This portal forms a ring in which genomic DNA is translocated into the capsid. This Human herpesvirus 6A (strain Uganda-1102) (HHV-6 variant A) protein is Tripartite terminase subunit 2.